The following is a 135-amino-acid chain: Transcription antitermination protein NusB (135 aa).

It belongs to the NusB family.

Functionally, involved in transcription antitermination. Required for transcription of ribosomal RNA (rRNA) genes. Binds specifically to the boxA antiterminator sequence of the ribosomal RNA (rrn) operons. The protein is Transcription antitermination protein NusB of Clostridium acetobutylicum (strain ATCC 824 / DSM 792 / JCM 1419 / IAM 19013 / LMG 5710 / NBRC 13948 / NRRL B-527 / VKM B-1787 / 2291 / W).